A 115-amino-acid polypeptide reads, in one-letter code: Delta-hexatoxin-Hi1a (115 aa).

The first 18 residues, 1–18 (MKVIATLYGLLFLTVVLG), serve as a signal peptide directing secretion. The propeptide occupies 19 to 73 (DITEGNENDLVENFREELSEADIPLLKKLEAIEDALLEKDFLPYEEEDRNARPKR). Disulfide bonds link C74-C88, C81-C93, C87-C104, and C89-C115.

It belongs to the neurotoxin 06 (delta-actx) family. In terms of tissue distribution, expressed by the venom gland.

It localises to the secreted. Neurotoxin that slows inactivation of voltage-gated sodium channels (Nav). In vivo, is lethal to both vertebrates and insects. This chain is Delta-hexatoxin-Hi1a, found in Hadronyche infensa (Fraser island funnel-web spider).